The chain runs to 276 residues: MVSLTSVPPYADATPDTRASSGPAPGRRKRMPLREHLAELRTRLLLVAGGLVVGAVVGWLLYDPLLVLLTRPLHLAAATQHKDIALNFTALGSPLDTRIKVSLFLAVMVTCPWWLYQVWAFVTPGLTRREKRHAYGFLGAAVPLFLGGAGLSWWVLPHAVDIFASFVPAGSSQYVNAQEYLSFVMRLVLAFGVAFVAPVLLVALNLAGIVRHETLARGWRWAVLLAFVFAAVMTPTPDALTMVLVAAPICALYFGALGVAVWHDRRADRRTAPAAA.

The segment at 1–29 is disordered; it reads MVSLTSVPPYADATPDTRASSGPAPGRRK. 6 consecutive transmembrane segments (helical) span residues 49–69, 103–123, 136–156, 187–207, 221–241, and 242–262; these read GGLV…LVLL, LFLA…AFVT, GFLG…WWVL, LVLA…LNLA, WAVL…DALT, and MVLV…VAVW.

The protein belongs to the TatC family. The Tat system comprises two distinct complexes: a TatABC complex, containing multiple copies of TatA, TatB and TatC subunits, and a separate TatA complex, containing only TatA subunits. Substrates initially bind to the TatABC complex, which probably triggers association of the separate TatA complex to form the active translocon.

It localises to the cell membrane. In terms of biological role, part of the twin-arginine translocation (Tat) system that transports large folded proteins containing a characteristic twin-arginine motif in their signal peptide across membranes. Together with TatB, TatC is part of a receptor directly interacting with Tat signal peptides. In Xylanimonas cellulosilytica (strain DSM 15894 / JCM 12276 / CECT 5975 / KCTC 9989 / LMG 20990 / NBRC 107835 / XIL07), this protein is Sec-independent protein translocase protein TatC.